The sequence spans 120 residues: NAD(P)H-quinone oxidoreductase subunit 3 (120 aa).

The next 3 helical transmembrane spans lie at 7–27, 64–84, and 89–109; these read YEYV…ALTA, MFAL…PWAV, and LGLL…VALV.

This sequence belongs to the complex I subunit 3 family. As to quaternary structure, NDH-1 can be composed of about 15 different subunits; different subcomplexes with different compositions have been identified which probably have different functions.

It is found in the cellular thylakoid membrane. The enzyme catalyses a plastoquinone + NADH + (n+1) H(+)(in) = a plastoquinol + NAD(+) + n H(+)(out). It carries out the reaction a plastoquinone + NADPH + (n+1) H(+)(in) = a plastoquinol + NADP(+) + n H(+)(out). NDH-1 shuttles electrons from an unknown electron donor, via FMN and iron-sulfur (Fe-S) centers, to quinones in the respiratory and/or the photosynthetic chain. The immediate electron acceptor for the enzyme in this species is believed to be plastoquinone. Couples the redox reaction to proton translocation, and thus conserves the redox energy in a proton gradient. Cyanobacterial NDH-1 also plays a role in inorganic carbon-concentration. The protein is NAD(P)H-quinone oxidoreductase subunit 3 of Crocosphaera subtropica (strain ATCC 51142 / BH68) (Cyanothece sp. (strain ATCC 51142)).